The primary structure comprises 206 residues: Uracil phosphoribosyltransferase (206 aa).

5-phospho-alpha-D-ribose 1-diphosphate is bound by residues R76, R101, and 128–136 (DPMLATGGS). Residues I191 and 196–198 (GDA) contribute to the uracil site. D197 serves as a coordination point for 5-phospho-alpha-D-ribose 1-diphosphate.

It belongs to the UPRTase family. The cofactor is Mg(2+).

It catalyses the reaction UMP + diphosphate = 5-phospho-alpha-D-ribose 1-diphosphate + uracil. It functions in the pathway pyrimidine metabolism; UMP biosynthesis via salvage pathway; UMP from uracil: step 1/1. Allosterically activated by GTP. Functionally, catalyzes the conversion of uracil and 5-phospho-alpha-D-ribose 1-diphosphate (PRPP) to UMP and diphosphate. This Malacoplasma penetrans (strain HF-2) (Mycoplasma penetrans) protein is Uracil phosphoribosyltransferase.